A 1588-amino-acid polypeptide reads, in one-letter code: Paternally-expressed gene 3 protein (1588 aa).

Residues 46-128 (HQRFRNLIYV…TLLENYKEMY (83 aa)) form the SCAN box domain. 3 disordered regions span residues 128-230 (YQPE…ESYQ), 266-306 (DGHS…RRGI), and 319-349 (KFIK…MSDD). Positions 129–142 (QPEDDNNSDVTSDD) are enriched in acidic residues. Composition is skewed to basic and acidic residues over residues 143 to 152 (DMTRNRRESS), 161 to 182 (SGDR…DRWS), 206 to 225 (FEMD…RSQD), and 295 to 306 (PEAKKSTHRRGI). C2H2-type zinc fingers lie at residues 454-476 (YVCD…QIMH), 507-529 (FECK…RKIH), and 565-587 (YECR…QKIH). The span at 588 to 607 (FGDDKDNEREHERERERGET) shows a compositional bias: basic and acidic residues. The interval 588-610 (FGDDKDNEREHERERERGETFRP) is disordered. The C2H2-type 4 zinc-finger motif lies at 627–649 (YECKVCGETFLHSSSLKEHQKIH). The interval 838 to 930 (LVASKPPRSH…EFSVPSSNVR (93 aa)) is disordered. Residues 868-881 (LNDKRQKIPARENP) show a composition bias toward basic and acidic residues. A C2H2-type 5 zinc finger spans residues 969–991 (YECQECGECFAHSSDLTEHQKIH). A disordered region spans residues 1056–1104 (EKSHGEESQGENTDGEETHSEETHGQETIEDPVIQGSDMEDPQKDDPDD). Residues 1071-1082 (EETHSEETHGQE) are compositionally biased toward basic and acidic residues. C2H2-type zinc fingers lie at residues 1107-1129 (YECE…QKVH), 1163-1185 (YECP…QRIH), 1225-1247 (IRCL…MRLH), 1282-1304 (FECA…VTVH), and 1332-1354 (YECK…KELH). The tract at residues 1393 to 1495 (EAAEPEVEAX…GIEDPEEGED (103 aa)) is disordered. Positions 1395–1415 (AEPEVEAXEPEVEAAEPEVEA) are enriched in acidic residues. 7 consecutive repeat copies span residues 1397-1403 (PEVEAXE), 1404-1410 (PEVEAAE), 1411-1417 (PEVEAAE), 1418-1422 (PNGEA), 1425-1429 (PDGEA), 1432-1436 (PIGEA), and 1439-1443 (PNGEA). Residues 1397-1417 (PEVEAXEPEVEAAEPEVEAAE) are 3 X 7 AA repeat of P-E-V-E-A-A-E. Positions 1418–1443 (PNGEAEGPDGEAAEPIGEAGQPNGEA) are 4 X 5 AA repeat of P-X-G-E-A. 2 stretches are compositionally biased toward acidic residues: residues 1449–1466 (DADE…ERAE) and 1475–1495 (PEGD…EGED). C2H2-type zinc fingers lie at residues 1505 to 1527 (YDCH…LKTH) and 1564 to 1586 (FKCD…QNTH).

It belongs to the krueppel C2H2-type zinc-finger protein family. As to quaternary structure, homodimer. Interacts with SIAH1A and SIAH2. Interacts with TRAF2.

Its subcellular location is the nucleus. The protein localises to the cytoplasm. Induces apoptosis in cooperation with SIAH1A. Acts as a mediator between p53/TP53 and BAX in a neuronal death pathway that is activated by DNA damage. Acts synergistically with TRAF2 and inhibits TNF induced apoptosis through activation of NF-kappa-B. The polypeptide is Paternally-expressed gene 3 protein (PEG3) (Pan paniscus (Pygmy chimpanzee)).